A 368-amino-acid chain; its full sequence is Transmembrane protein 26 (368 aa).

3 helical membrane-spanning segments follow: residues 4–24 (LVFL…LVGV), 36–56 (YWLL…TLKF), and 65–85 (FSPA…LLEL). Asn110 carries N-linked (GlcNAc...) asparagine glycosylation. A run of 5 helical transmembrane segments spans residues 150–170 (QTFL…GGIT), 177–197 (LLLM…ETLE), 208–228 (VYAI…DLAV), 257–277 (IGIS…ILMT), and 281–301 (VINQ…VLQL). The segment at 324–368 (GEHGCRAQTSESGPSQRDWQNESKEGLAIPLRGSPVTSDDSHHTP) is disordered. A compositionally biased stretch (polar residues) spans 330-341 (AQTSESGPSQRD).

Its subcellular location is the membrane. The sequence is that of Transmembrane protein 26 (TMEM26) from Homo sapiens (Human).